Consider the following 207-residue polypeptide: Lipid A acyltransferase PagP (207 aa).

The N-terminal stretch at 1 to 24 (MKFDLTTAYTLSIPLLASSGTVLA) is a signal peptide. Active-site residues include His-79, Asp-122, and Ser-123.

Belongs to the lipid A palmitoyltransferase family. As to quaternary structure, homodimer.

It localises to the cell outer membrane. The catalysed reaction is a lipid A + a 1,2-diacyl-sn-glycero-3-phosphocholine = a hepta-acyl lipid A + a 2-acyl-sn-glycero-3-phosphocholine. It carries out the reaction a lipid IVA + a 1,2-diacyl-sn-glycero-3-phosphocholine = a lipid IVB + a 2-acyl-sn-glycero-3-phosphocholine. The enzyme catalyses a lipid IIA + a 1,2-diacyl-sn-glycero-3-phosphocholine = a lipid IIB + a 2-acyl-sn-glycero-3-phosphocholine. Functionally, transfers a fatty acid residue from the sn-1 position of a phospholipid to the N-linked hydroxyfatty acid chain on the proximal unit of lipid A or its precursors. The chain is Lipid A acyltransferase PagP from Photorhabdus asymbiotica subsp. asymbiotica (strain ATCC 43949 / 3105-77) (Xenorhabdus luminescens (strain 2)).